Here is a 183-residue protein sequence, read N- to C-terminus: A-type ATP synthase subunit E (183 aa).

It belongs to the V-ATPase E subunit family. Has multiple subunits with at least A(3), B(3), C, D, E, F, H, I and proteolipid K(x).

The protein resides in the cell membrane. In terms of biological role, component of the A-type ATP synthase that produces ATP from ADP in the presence of a proton gradient across the membrane. In Methanosarcina barkeri (strain Fusaro / DSM 804), this protein is A-type ATP synthase subunit E.